The sequence spans 2204 residues: Non-reducing polyketide synthase CTB1 (2204 aa).

Residues 11 to 250 (AFGDQTYDCS…TRLPITAPYH (240 aa)) are N-terminal acylcarrier protein transacylase domain (SAT). The Ketosynthase family 3 (KS3) domain occupies 382–815 (KSPIAILAAS…GGNTCLVLED (434 aa)). Residues cysteine 554, histidine 689, and histidine 734 each act as for beta-ketoacyl synthase activity in the active site. The interval 923–1224 (AFTGQGSAFE…QTFASINKDK (302 aa)) is malonyl-CoA:ACP transacylase (MAT) domain. The segment at 1299 to 1619 (SSSIHKVITN…VPKRLMHYIV (321 aa)) is product template (PT) domain. The segment at 1303–1439 (HKVITNTITA…CKIRFGSLEK (137 aa)) is N-terminal hotdog fold. One can recognise a PKS/mFAS DH domain in the interval 1303-1616 (HKVITNTITA…LQGVPKRLMH (314 aa)). Residue histidine 1336 is the Proton acceptor; for dehydratase activity of the active site. Residues 1468-1616 (TYRFSKGMIY…LQGVPKRLMH (149 aa)) are C-terminal hotdog fold. Aspartate 1528 acts as the Proton donor; for dehydratase activity in catalysis. The disordered stretch occupies residues 1625-1674 (KASGPPTEKKGSSPPVEKKASAPVAPTRPAIQRKNASIPPPATQVTPQNK). The span at 1631–1644 (TEKKGSSPPVEKKA) shows a compositional bias: basic and acidic residues. 2 Carrier domains span residues 1679-1756 (PSVS…TRLS) and 1783-1865 (DPSP…SGST). Residues serine 1716 and serine 1824 each carry the O-(pantetheine 4'-phosphoryl)serine modification. Residues 1864–1875 (STESFDSTTTKP) are compositionally biased toward polar residues. The segment at 1864-1931 (STESFDSTTT…PPKGRIPPAW (68 aa)) is disordered. Residues 1880-1895 (ATPPLTDSSASSPPSS) are compositionally biased toward low complexity. The tract at residues 1945 to 2195 (ILFLFPDGAG…SGAQMLVEHM (251 aa)) is thioesterase (TE) domain.

Pantetheine 4'-phosphate serves as cofactor.

The enzyme catalyses 6 malonyl-CoA + acetyl-CoA + 6 H(+) = nor-toralactone + 6 CO2 + 7 CoA + 2 H2O. It participates in mycotoxin biosynthesis. In terms of biological role, polyketide synthase; part of the gene cluster that mediates the biosynthesis of cercosporin, a light-activated, non-host-selective toxin. The perylenequinone chromophore of cercosporin absorbs light energy to attain an electronically-activated triplet state and produces active oxygen species such as the hydroxyl radical, superoxide, hydrogen peroxide or singlet oxygen upon reaction with oxygen molecules. These reactive oxygen species cause damage to various cellular components including lipids, proteins and nucleic acids. The first step of cercosporin biosynthesis is performed by the polyketide synthase CTB1 which catalyzes the formation of nor-toralactone. The starter unit acyltransferase (SAT) domain of CTB1 initiates polyketide extension by the selective utilization of acetyl-CoA, which is elongated to the heptaketide in the beta-ketoacyl synthase (KS) domain by successive condensations with six malonyl units introduced by the malonyl acyltransferase (MAT) domain. The product template (PT) domain catalyzes C4-C9 and C2-C11 aldol cyclizations and dehydrations to a trihydroxynaphthalene, which is thought to be delivered to the thioesterase (TE) domain for product release. The bifunctional enzyme CTB3 then methylates nor-toralactone to toralactone before conducting an unusual oxidative aromatic ring opening. The O-methyltransferase CTB2 further methylates the nascent OH-6 of the CBT3 product, blocking further oxidation at this site before the reductase CTB6 reduces the 2-oxopropyl ketone at position C7, giving naphthalene. The FAD-dependent monooxygenase CTB5 in concert with the multicopper oxidase CTB12 are responsible for homodimerization of naphthalene with CTB7 installing the dioxepine moiety, finally producing cercosporin. The fasciclin domain-containing protein CTB11 might act with CTB5 and CTB12 whereas the roles of CTB9 and CTB10 have still to be elucidated. In Cercospora beticola (Sugarbeet leaf spot fungus), this protein is Non-reducing polyketide synthase CTB1.